Here is a 399-residue protein sequence, read N- to C-terminus: 3-methyl-2-oxobutanoate hydroxymethyltransferase 2, mitochondrial (399 aa).

The transit peptide at 1–90 (MSFSRLLTPR…ARRVTLATLR (90 aa)) directs the protein to the mitochondrion. 2 residues coordinate Mg(2+): Asp125 and Asp164. 3-methyl-2-oxobutanoate is bound by residues 125-126 (DS), Asp164, and Lys194. Glu196 serves as a coordination point for Mg(2+). Glu264 (proton acceptor) is an active-site residue.

It belongs to the PanB family. Mg(2+) serves as cofactor.

Its subcellular location is the mitochondrion. The catalysed reaction is 3-methyl-2-oxobutanoate + (6R)-5,10-methylene-5,6,7,8-tetrahydrofolate + H2O = 2-dehydropantoate + (6S)-5,6,7,8-tetrahydrofolate. It functions in the pathway cofactor biosynthesis; (R)-pantothenate biosynthesis; (R)-pantoate from 3-methyl-2-oxobutanoate: step 1/2. Catalyzes the reversible reaction in which hydroxymethyl group from 5,10-methylenetetrahydrofolate is transferred onto alpha-ketoisovalerate to form ketopantoate. The polypeptide is 3-methyl-2-oxobutanoate hydroxymethyltransferase 2, mitochondrial (KPHMT2) (Oryza sativa subsp. japonica (Rice)).